A 112-amino-acid polypeptide reads, in one-letter code: MSNLHELKCEACHIDAPKVTDLELEEMLQGISQWRVIERDGIKQLEREFTFKNFKLAWAFSNKIAELAEAEFHHPTITLEWGKVTVCWWSHSAKGLHKNDFICAAKTDRCLE.

The protein belongs to the pterin-4-alpha-carbinolamine dehydratase family.

The enzyme catalyses (4aS,6R)-4a-hydroxy-L-erythro-5,6,7,8-tetrahydrobiopterin = (6R)-L-erythro-6,7-dihydrobiopterin + H2O. The sequence is that of Putative pterin-4-alpha-carbinolamine dehydratase from Photobacterium profundum (strain SS9).